A 265-amino-acid polypeptide reads, in one-letter code: Tyrosine protein kinase-interacting protein (265 aa).

Residues Met1–Pro14 are compositionally biased toward acidic residues. The segment at Met1–Ile49 is disordered. Over Met1 to Ala238 the chain is Cytoplasmic. Positions Glu15–Leu26 are enriched in basic and acidic residues. Over residues Ser27–Asp43 the composition is skewed to low complexity. Tyr123 is subject to Phosphotyrosine; by host LCK. Tyr136 is subject to Phosphotyrosine; by host. The CSKH/LBD2 stretch occupies residues Glu155–Tyr164. The disordered stretch occupies residues Lys172–Pro192. The tract at residues Met183–Pro192 is SH3B/LBD1. A compositionally biased stretch (pro residues) spans Met183 to Pro192. Residues Ile225–Asn234 form an SH3 binding region. A helical transmembrane segment spans residues Ile239–Leu259. At His260–Ser265 the chain is on the extracellular side.

Binds host LCK, human WDR48 and human NXF1/TAP. Forms a complex with activated LCK and STAT1 and STAT3. In terms of processing, phosphorylation on Tyr-123 acts as a docking site for the recruitment of STATs 1 and 3.

The protein localises to the host cell membrane. Its function is as follows. Plays a critical role in virus induced T-cell transformation. Binds to T-cell-specific tyrosine kinase LCK SH2 and SH3 domains, thereby activating its kinase activity. Once phosphorylated by host LCK, forms a complex with at least STAT 1 and 3, resulting on the phosphorylation of STAT3 and presumably STAT1, and their migration into the nucleus to induce transcription of target genes. Stimulates host ILF3/NF-AT-90 activity. Association with host NXF1/TAP transduces the signal up-regulating surface expression of adhesion molecules as well as activating NF-kappa-B activity. Acts synergistically with StpC to stimulate NF-kappa-B activity and interleukin-2 gene expression. Activation of NF-kappa-B protects lymphocytes from apoptosis, thereby facilitating viral induced cell transformation. May cause down-regulation of host LCK and cell apoptosis when stably overexpressed ex vivo. Interaction with WDR48 induce degradation of T-cell receptor in a lysosome-dependent fashion, when both proteins are overexpressed. The biological effect of this interaction remains controversial since no T-cell receptor degradation is observed in infected cells. The sequence is that of Tyrosine protein kinase-interacting protein from Saimiriine herpesvirus 2 (strain 484) (SaHV-2).